The sequence spans 239 residues: Demethylmenaquinone methyltransferase (239 aa).

S-adenosyl-L-methionine contacts are provided by residues Thr-60, Asp-81, and 106-107; that span reads DA.

This sequence belongs to the class I-like SAM-binding methyltransferase superfamily. MenG/UbiE family.

The catalysed reaction is a 2-demethylmenaquinol + S-adenosyl-L-methionine = a menaquinol + S-adenosyl-L-homocysteine + H(+). The protein operates within quinol/quinone metabolism; menaquinone biosynthesis; menaquinol from 1,4-dihydroxy-2-naphthoate: step 2/2. In terms of biological role, methyltransferase required for the conversion of demethylmenaquinol (DMKH2) to menaquinol (MKH2). This Staphylococcus haemolyticus (strain JCSC1435) protein is Demethylmenaquinone methyltransferase.